Reading from the N-terminus, the 356-residue chain is Heat-inducible transcription repressor HrcA (356 aa).

Belongs to the HrcA family.

Functionally, negative regulator of class I heat shock genes (grpE-dnaK-dnaJ and groELS operons). Prevents heat-shock induction of these operons. The protein is Heat-inducible transcription repressor HrcA of Bartonella henselae (strain ATCC 49882 / DSM 28221 / CCUG 30454 / Houston 1) (Rochalimaea henselae).